We begin with the raw amino-acid sequence, 213 residues long: High frequency lysogenization protein HflD homolog (213 aa).

Residues 79–122 (QGLNAELTRYTLSLMVLERKLSSAKGALNTLGDRINGLQRQLDH) are a coiled coil.

The protein belongs to the HflD family.

It localises to the cytoplasm. Its subcellular location is the cell inner membrane. The polypeptide is High frequency lysogenization protein HflD homolog (Salmonella dublin (strain CT_02021853)).